A 799-amino-acid polypeptide reads, in one-letter code: Lon protease 4 (799 aa).

The Lon N-terminal domain occupies 15–204; sequence FPLLPLRTGV…RVAGLLAEAS (190 aa). ATP is bound at residue 356–363; that stretch reads GPPGVGKT. The region spanning 595–776 is the Lon proteolytic domain; that stretch reads TSVAGVATGL…SQVIAAALEE (182 aa). Active-site residues include Ser-682 and Lys-725.

It belongs to the peptidase S16 family. As to quaternary structure, homohexamer. Organized in a ring with a central cavity.

It localises to the cytoplasm. The enzyme catalyses Hydrolysis of proteins in presence of ATP.. Functionally, ATP-dependent serine protease that mediates the selective degradation of mutant and abnormal proteins as well as certain short-lived regulatory proteins. Required for cellular homeostasis and for survival from DNA damage and developmental changes induced by stress. Degrades polypeptides processively to yield small peptide fragments that are 5 to 10 amino acids long. Binds to DNA in a double-stranded, site-specific manner. This Sorangium cellulosum (strain So ce56) (Polyangium cellulosum (strain So ce56)) protein is Lon protease 4.